The sequence spans 265 residues: Energy-coupling factor transporter ATP-binding protein EcfA1 (265 aa).

Positions 2–236 (IKIKNLVFRY…KEIVELAKID (235 aa)) constitute an ABC transporter domain. Residue 36–43 (GHNGSGKS) coordinates ATP.

It belongs to the ABC transporter superfamily. Energy-coupling factor EcfA family. Forms a stable energy-coupling factor (ECF) transporter complex composed of 2 membrane-embedded substrate-binding proteins (S component), 2 ATP-binding proteins (A component) and 2 transmembrane proteins (T component).

It localises to the cell membrane. Its function is as follows. ATP-binding (A) component of a common energy-coupling factor (ECF) ABC-transporter complex. Unlike classic ABC transporters this ECF transporter provides the energy necessary to transport a number of different substrates. The sequence is that of Energy-coupling factor transporter ATP-binding protein EcfA1 from Mycoplasmopsis pulmonis (strain UAB CTIP) (Mycoplasma pulmonis).